The primary structure comprises 237 residues: NAD(P)H-quinone oxidoreductase subunit K (237 aa).

[4Fe-4S] cluster contacts are provided by Cys52, Cys53, Cys117, and Cys148.

The protein belongs to the complex I 20 kDa subunit family. NDH-1 can be composed of about 15 different subunits; different subcomplexes with different compositions have been identified which probably have different functions. [4Fe-4S] cluster serves as cofactor.

It localises to the cellular thylakoid membrane. The catalysed reaction is a plastoquinone + NADH + (n+1) H(+)(in) = a plastoquinol + NAD(+) + n H(+)(out). It carries out the reaction a plastoquinone + NADPH + (n+1) H(+)(in) = a plastoquinol + NADP(+) + n H(+)(out). NDH-1 shuttles electrons from an unknown electron donor, via FMN and iron-sulfur (Fe-S) centers, to quinones in the respiratory and/or the photosynthetic chain. The immediate electron acceptor for the enzyme in this species is believed to be plastoquinone. Couples the redox reaction to proton translocation, and thus conserves the redox energy in a proton gradient. Cyanobacterial NDH-1 also plays a role in inorganic carbon-concentration. The chain is NAD(P)H-quinone oxidoreductase subunit K from Thermosynechococcus vestitus (strain NIES-2133 / IAM M-273 / BP-1).